The sequence spans 142 residues: Large ribosomal subunit protein uL11 (142 aa).

The protein belongs to the universal ribosomal protein uL11 family. Part of the ribosomal stalk of the 50S ribosomal subunit. Interacts with L10 and the large rRNA to form the base of the stalk. L10 forms an elongated spine to which L12 dimers bind in a sequential fashion forming a multimeric L10(L12)X complex. One or more lysine residues are methylated.

Functionally, forms part of the ribosomal stalk which helps the ribosome interact with GTP-bound translation factors. This Rhodopseudomonas palustris (strain HaA2) protein is Large ribosomal subunit protein uL11.